Consider the following 59-residue polypeptide: Insulin (59 aa).

3 disulfide bridges follow: Cys-7–Cys-45, Cys-19–Cys-58, and Cys-44–Cys-49.

This sequence belongs to the insulin family. As to quaternary structure, heterodimer of a B chain and an A chain linked by two disulfide bonds.

It is found in the secreted. Insulin decreases blood glucose concentration. It increases cell permeability to monosaccharides, amino acids and fatty acids. It accelerates glycolysis, the pentose phosphate cycle, and glycogen synthesis in liver. In Chimaera monstrosa (Rabbit fish), this protein is Insulin (ins).